Here is a 480-residue protein sequence, read N- to C-terminus: ATP synthase subunit beta (480 aa).

153-160 lines the ATP pocket; sequence GGAGVGKT.

The protein belongs to the ATPase alpha/beta chains family. As to quaternary structure, F-type ATPases have 2 components, CF(1) - the catalytic core - and CF(0) - the membrane proton channel. CF(1) has five subunits: alpha(3), beta(3), gamma(1), delta(1), epsilon(1). CF(0) has three main subunits: a(1), b(2) and c(9-12). The alpha and beta chains form an alternating ring which encloses part of the gamma chain. CF(1) is attached to CF(0) by a central stalk formed by the gamma and epsilon chains, while a peripheral stalk is formed by the delta and b chains.

It localises to the cell membrane. The catalysed reaction is ATP + H2O + 4 H(+)(in) = ADP + phosphate + 5 H(+)(out). Its function is as follows. Produces ATP from ADP in the presence of a proton gradient across the membrane. The catalytic sites are hosted primarily by the beta subunits. In Lactobacillus johnsonii (strain CNCM I-12250 / La1 / NCC 533), this protein is ATP synthase subunit beta.